A 261-amino-acid polypeptide reads, in one-letter code: Indole-3-glycerol phosphate synthase (261 aa).

It belongs to the TrpC family.

It carries out the reaction 1-(2-carboxyphenylamino)-1-deoxy-D-ribulose 5-phosphate + H(+) = (1S,2R)-1-C-(indol-3-yl)glycerol 3-phosphate + CO2 + H2O. It functions in the pathway amino-acid biosynthesis; L-tryptophan biosynthesis; L-tryptophan from chorismate: step 4/5. The polypeptide is Indole-3-glycerol phosphate synthase (Burkholderia thailandensis (strain ATCC 700388 / DSM 13276 / CCUG 48851 / CIP 106301 / E264)).